The chain runs to 980 residues: Vacuolar protein sorting-associated protein 11 homolog (980 aa).

The stretch at 407–554 is one CHCR repeat; it reads YKETIGMLEP…GRDLLIHARD (148 aa). Residues 803 to 843 form an RING-type; atypical zinc finger; that stretch reads CSACDTPLQLPTVHFLCKHAYHVHCFESYNMDGSDKCPACQ. Over residues 886-898 the composition is skewed to basic and acidic residues; sequence TKKTKKSEAKKDP. Positions 886 to 980 are disordered; the sequence is TKKTKKSEAK…APAPSTNPFD (95 aa). 2 stretches are compositionally biased toward polar residues: residues 917–937 and 947–960; these read TTIS…SRQR and TNPF…TRLS.

The protein belongs to the VPS11 family. Probable core component of at least two putative endosomal tethering complexes, the homotypic fusion and vacuole protein sorting (HOPS) complex and the class C core vacuole/endosome tethering (CORVET) complex. Their common core is composed of the class C Vps proteins vps-11, vps-16 and vps-18, which in HOPS further associates with vps-33.1, vps-39 and vps-41 and in CORVET with vps-8 and vps-33.2.

The protein localises to the late endosome membrane. It localises to the lysosome membrane. Functionally, plays a role in vesicle-mediated protein trafficking to lysosomal compartments including the endocytic membrane transport pathways. Believed to act as a core component of the putative HOPS and CORVET endosomal tethering complexes which are proposed to be involved in the rab-5-to-rab-7 endosome conversion probably implicating sand-1, and via binding SNAREs and SNARE complexes to mediate tethering and docking events during SNARE-mediated membrane fusion. The HOPS complex is proposed to be recruited to Rab7 on the late endosomal membrane and to regulate late endocytic, phagocytic and autophagic traffic towards lysosomes. Within the HOPS complex, contributes to the normal development of gut granules in embryonic and adult intestinal cells. The CORVET complex is proposed to function as a Rab5 effector to mediate early endosome fusion probably in specific endosome subpopulations. Required for fusion of endosomes and autophagosomes with lysosomes. Involved in cargo transport from early to late endosomes and required for the transition from early to late endosomes. Possibly has a role in clearance of apoptotic cells during programmed cell death. The chain is Vacuolar protein sorting-associated protein 11 homolog from Caenorhabditis elegans.